Consider the following 389-residue polypeptide: Cobalt-precorrin-5B C(1)-methyltransferase (389 aa).

A disordered region spans residues Met-1–Asp-25.

This sequence belongs to the CbiD family.

The catalysed reaction is Co-precorrin-5B + S-adenosyl-L-methionine = Co-precorrin-6A + S-adenosyl-L-homocysteine. The protein operates within cofactor biosynthesis; adenosylcobalamin biosynthesis; cob(II)yrinate a,c-diamide from sirohydrochlorin (anaerobic route): step 6/10. Its function is as follows. Catalyzes the methylation of C-1 in cobalt-precorrin-5B to form cobalt-precorrin-6A. The polypeptide is Cobalt-precorrin-5B C(1)-methyltransferase (Nitratidesulfovibrio vulgaris (strain ATCC 29579 / DSM 644 / CCUG 34227 / NCIMB 8303 / VKM B-1760 / Hildenborough) (Desulfovibrio vulgaris)).